The sequence spans 633 residues: Chaperone protein HtpG (633 aa).

The a; substrate-binding stretch occupies residues 1–341 (MSATSSKETL…SADLPLNVSR (341 aa)). Residues 342–558 (EILQSSRDID…EGDMSANLER (217 aa)) form a b region. The segment at 559–633 (LLKAAGQAAP…LNGLLAMLPG (75 aa)) is c.

The protein belongs to the heat shock protein 90 family. Homodimer.

It is found in the cytoplasm. Its function is as follows. Molecular chaperone. Has ATPase activity. This is Chaperone protein HtpG from Thiobacillus denitrificans (strain ATCC 25259 / T1).